A 228-amino-acid chain; its full sequence is uncharacterized protein (228 aa).

Residues 11 to 78 (PPVNQQIYRI…PQRGSYVNKI (68 aa)) form the HTH gntR-type domain. The H-T-H motif DNA-binding region spans 38-57 (EKEVSVRFNVSRQPVREAFI).

This is an uncharacterized protein from Escherichia coli O6:H1 (strain CFT073 / ATCC 700928 / UPEC).